Reading from the N-terminus, the 358-residue chain is 3-isopropylmalate dehydrogenase (358 aa).

Arg92, Arg102, Arg130, and Asp224 together coordinate substrate. Residues Asp224, Asp248, and Asp252 each coordinate Mg(2+). 282–294 (GSAPDIAGQGIAN) contacts NAD(+).

This sequence belongs to the isocitrate and isopropylmalate dehydrogenases family. LeuB type 1 subfamily. As to quaternary structure, homodimer. It depends on Mg(2+) as a cofactor. Mn(2+) serves as cofactor.

The protein localises to the cytoplasm. The catalysed reaction is (2R,3S)-3-isopropylmalate + NAD(+) = 4-methyl-2-oxopentanoate + CO2 + NADH. It functions in the pathway amino-acid biosynthesis; L-leucine biosynthesis; L-leucine from 3-methyl-2-oxobutanoate: step 3/4. Its function is as follows. Catalyzes the oxidation of 3-carboxy-2-hydroxy-4-methylpentanoate (3-isopropylmalate) to 3-carboxy-4-methyl-2-oxopentanoate. The product decarboxylates to 4-methyl-2 oxopentanoate. This Bordetella pertussis (strain Tohama I / ATCC BAA-589 / NCTC 13251) protein is 3-isopropylmalate dehydrogenase.